A 368-amino-acid chain; its full sequence is MSLNLQTYTEHFTNPLYLESGRILEPYDITYETYGTMNEDKSNVVVVCHALTGSHHAAGLYEDETKPGWWDGFIGSGKAIDTDKYFVICSNVIGSCFGSTGPMSLQHPYQEPYRYKFPVVSIKDMVKAQRILFDRLDIHRVHAIVGGSMGGMQALQFAIHYPNFANKIIALATTHATQPWAIAFNKVAQESILNDPDFKQGYYDPDLLKEQGLSGMAVGRMAGHISFLSHESMREKFGRDYKLTDGLYELFGKFQVESYLEYNGYNFTKWFDPLAYLYITKAINIYDLSRGFDSLAEALKRVTSALYLVSFKNDLLFKNFEMKEIADELDKIGNKNHSYIDVKSDYGHDAFLVELNKFENHVKDALNG.

The region spanning 43-354 (NVVVVCHALT…DYGHDAFLVE (312 aa)) is the AB hydrolase-1 domain. Catalysis depends on Ser-148, which acts as the Nucleophile. Arg-220 is a substrate binding site. Active-site residues include Asp-314 and His-348. A substrate-binding site is contributed by Asp-349.

Belongs to the AB hydrolase superfamily. MetX family. As to quaternary structure, homodimer.

The protein resides in the cytoplasm. The catalysed reaction is L-homoserine + acetyl-CoA = O-acetyl-L-homoserine + CoA. Its pathway is amino-acid biosynthesis; L-methionine biosynthesis via de novo pathway; O-acetyl-L-homoserine from L-homoserine: step 1/1. Its function is as follows. Transfers an acetyl group from acetyl-CoA to L-homoserine, forming acetyl-L-homoserine. This Sulfurimonas autotrophica (strain ATCC BAA-671 / DSM 16294 / JCM 11897 / OK10) protein is Homoserine O-acetyltransferase.